The chain runs to 127 residues: Major sperm protein 10/36/56/76 (127 aa).

Ala-2 carries the post-translational modification N-acetylalanine. The 118-residue stretch at 9 to 126 folds into the MSP domain; that stretch reads DIQTQPNAKI…RRKNLPIEYN (118 aa).

Sperm.

The protein resides in the cell projection. The protein localises to the pseudopodium. Its subcellular location is the cytoplasm. It localises to the cytoskeleton. In terms of biological role, central component in molecular interactions underlying sperm crawling. Forms an extensive filament system that extends from sperm villipoda, along the leading edge of the pseudopod. This chain is Major sperm protein 10/36/56/76 (msp-10), found in Caenorhabditis elegans.